A 679-amino-acid polypeptide reads, in one-letter code: Methionine--tRNA ligase (679 aa).

The 'HIGH' region motif lies at 15–25 (PYANGPIHLGH). Zn(2+)-binding residues include C146, C149, C159, and C162. Residues 332 to 336 (KMSKS) carry the 'KMSKS' region motif. An ATP-binding site is contributed by K335. Residues 578–679 (DFAKIDLRIA…EGAQPGMKVK (102 aa)) form the tRNA-binding domain.

The protein belongs to the class-I aminoacyl-tRNA synthetase family. MetG type 1 subfamily. Homodimer. Zn(2+) is required as a cofactor.

The protein localises to the cytoplasm. It catalyses the reaction tRNA(Met) + L-methionine + ATP = L-methionyl-tRNA(Met) + AMP + diphosphate. Functionally, is required not only for elongation of protein synthesis but also for the initiation of all mRNA translation through initiator tRNA(fMet) aminoacylation. This is Methionine--tRNA ligase from Shewanella pealeana (strain ATCC 700345 / ANG-SQ1).